Consider the following 164-residue polypeptide: Probable ubiquitin-conjugating enzyme E2 7 (164 aa).

Positions 3–163 (QSSLLLKKQL…VAQCVRRSQE (161 aa)) constitute a UBC core domain. Residue cysteine 88 is the Glycyl thioester intermediate of the active site.

It belongs to the ubiquitin-conjugating enzyme family.

The enzyme catalyses S-ubiquitinyl-[E1 ubiquitin-activating enzyme]-L-cysteine + [E2 ubiquitin-conjugating enzyme]-L-cysteine = [E1 ubiquitin-activating enzyme]-L-cysteine + S-ubiquitinyl-[E2 ubiquitin-conjugating enzyme]-L-cysteine.. It participates in protein modification; protein ubiquitination. In terms of biological role, catalyzes the covalent attachment of ubiquitin to other proteins. The sequence is that of Probable ubiquitin-conjugating enzyme E2 7 (ubc-7) from Caenorhabditis elegans.